The primary structure comprises 599 residues: UvrABC system protein C (599 aa).

One can recognise a GIY-YIG domain in the interval 18–96 (QLPGVYKMLG…IKQHRPPYNI (79 aa)). Residues 207–242 (KELNQELIAKMEQAAADLEFEKAVFYRDRLSLLREV) form the UVR domain.

Belongs to the UvrC family. In terms of assembly, interacts with UvrB in an incision complex.

The protein resides in the cytoplasm. The UvrABC repair system catalyzes the recognition and processing of DNA lesions. UvrC both incises the 5' and 3' sides of the lesion. The N-terminal half is responsible for the 3' incision and the C-terminal half is responsible for the 5' incision. This chain is UvrABC system protein C, found in Acinetobacter baumannii (strain SDF).